Reading from the N-terminus, the 115-residue chain is MSGLTTHILDQASGKPAAGVGVRVSRRDGEQTQWLAELRTDADGRARLVAGEDLAVGGYRLEFAIGDHFKASGLPVSDPPFLDVVVIDFAVSNLDQHWHVPLLVSPYGYSTYRGS.

Residues 1-23 (MSGLTTHILDQASGKPAAGVGVR) are disordered. Substrate contacts are provided by histidine 7, arginine 45, and tyrosine 112.

The protein belongs to the transthyretin family. 5-hydroxyisourate hydrolase subfamily. In terms of assembly, homotetramer.

It catalyses the reaction 5-hydroxyisourate + H2O = 5-hydroxy-2-oxo-4-ureido-2,5-dihydro-1H-imidazole-5-carboxylate + H(+). Functionally, catalyzes the hydrolysis of 5-hydroxyisourate (HIU) to 2-oxo-4-hydroxy-4-carboxy-5-ureidoimidazoline (OHCU). The chain is 5-hydroxyisourate hydrolase from Caulobacter vibrioides (strain ATCC 19089 / CIP 103742 / CB 15) (Caulobacter crescentus).